The primary structure comprises 550 residues: Calcium-dependent protein kinase 20 (550 aa).

The disordered stretch occupies residues 1-58 (MGNCCVTPEGSGRGRKKQQQEQKQKQKEPKQQQQQQKKGKKPNPFSIEYNRSSAPSGH). A lipid anchor (N-myristoyl glycine) is attached at glycine 2. Residues 18 to 30 (QQQEQKQKQKEPK) show a composition bias toward basic and acidic residues. The 259-residue stretch at 75-333 (YELGGELGRG…AQQVLDHPWL (259 aa)) folds into the Protein kinase domain. ATP is bound by residues 81–89 (LGRGEFGVT) and lysine 104. Residue aspartate 199 is the Proton acceptor of the active site. Residues 339–369 (APNVNLGETVKARLQQFSVMNKFKKHALRVI) form an autoinhibitory domain region. 4 consecutive EF-hand domains span residues 376–411 (EEVAGIKDMFEKMDLNKDNMINFDELKLGLHKLGHQ), 412–447 (MADADVQILMDAADVDGNGSLDYGEFVALSVHLRKI), 448–483 (GNDEHLHKAFAYFDRNQSGYIEIDELRESLADDLGA), and 484–519 (NHEEVINAIIRDVDTDKDGKISYDEFAAMMKAGTDW). Aspartate 389, asparagine 391, aspartate 393, methionine 395, glutamate 400, aspartate 425, aspartate 427, asparagine 429, serine 431, glutamate 436, aspartate 461, asparagine 463, serine 465, tyrosine 467, glutamate 472, aspartate 497, aspartate 499, aspartate 501, lysine 503, and glutamate 508 together coordinate Ca(2+).

It belongs to the protein kinase superfamily. Ser/Thr protein kinase family. CDPK subfamily. In terms of tissue distribution, expressed in roots and leaf blades.

It is found in the membrane. The catalysed reaction is L-seryl-[protein] + ATP = O-phospho-L-seryl-[protein] + ADP + H(+). It carries out the reaction L-threonyl-[protein] + ATP = O-phospho-L-threonyl-[protein] + ADP + H(+). Its activity is regulated as follows. Activated by calcium. Autophosphorylation may play an important role in the regulation of the kinase activity. In terms of biological role, may play a role in signal transduction pathways that involve calcium as a second messenger. The sequence is that of Calcium-dependent protein kinase 20 from Oryza sativa subsp. japonica (Rice).